A 308-amino-acid chain; its full sequence is Glutaminase (308 aa).

Positions 66, 117, 161, 168, 192, 244, and 262 each coordinate substrate.

Belongs to the glutaminase family. Homotetramer.

It carries out the reaction L-glutamine + H2O = L-glutamate + NH4(+). The polypeptide is Glutaminase (Proteus mirabilis (strain HI4320)).